We begin with the raw amino-acid sequence, 200 residues long: WASH complex subunit 3 (200 aa).

Positions 56-76 (SLRIQQIETTLSILEAKLASI) form a coiled coil. Disordered regions lie at residues 87–130 (VRAP…AENI) and 165–200 (DPNLLDTPDAAVPDASKKRLEEQDDDSSGSESSFSD).

This sequence belongs to the CCDC53 family. As to quaternary structure, component of the WASH complex.

The chain is WASH complex subunit 3 from Danio rerio (Zebrafish).